A 390-amino-acid polypeptide reads, in one-letter code: Branched-chain-amino-acid aminotransferase (390 aa).

Position 225 is an N6-(pyridoxal phosphate)lysine (Lys-225).

It belongs to the class-IV pyridoxal-phosphate-dependent aminotransferase family. Homodimer. Pyridoxal 5'-phosphate is required as a cofactor.

It catalyses the reaction L-leucine + 2-oxoglutarate = 4-methyl-2-oxopentanoate + L-glutamate. The catalysed reaction is L-isoleucine + 2-oxoglutarate = (S)-3-methyl-2-oxopentanoate + L-glutamate. It carries out the reaction L-valine + 2-oxoglutarate = 3-methyl-2-oxobutanoate + L-glutamate. In terms of biological role, catalyzes the first reaction in the catabolism of the essential branched chain amino acids leucine, isoleucine, and valine. The chain is Branched-chain-amino-acid aminotransferase from Monosiga brevicollis (Choanoflagellate).